Here is a 223-residue protein sequence, read N- to C-terminus: ATP phosphoribosyltransferase (223 aa).

Belongs to the ATP phosphoribosyltransferase family. Short subfamily. Heteromultimer composed of HisG and HisZ subunits.

Its subcellular location is the cytoplasm. It catalyses the reaction 1-(5-phospho-beta-D-ribosyl)-ATP + diphosphate = 5-phospho-alpha-D-ribose 1-diphosphate + ATP. It participates in amino-acid biosynthesis; L-histidine biosynthesis; L-histidine from 5-phospho-alpha-D-ribose 1-diphosphate: step 1/9. Its function is as follows. Catalyzes the condensation of ATP and 5-phosphoribose 1-diphosphate to form N'-(5'-phosphoribosyl)-ATP (PR-ATP). Has a crucial role in the pathway because the rate of histidine biosynthesis seems to be controlled primarily by regulation of HisG enzymatic activity. The sequence is that of ATP phosphoribosyltransferase from Halothermothrix orenii (strain H 168 / OCM 544 / DSM 9562).